A 257-amino-acid chain; its full sequence is Snake venom serine protease KN2 (257 aa).

Positions 1-18 (MVLIRVLANLLILQLSYA) are cleaved as a signal peptide. The propeptide occupies 19–24 (QKSSEL). Residues 25–248 (VIGGHPCNIN…HLDWIKSIIA (224 aa)) form the Peptidase S1 domain. 6 cysteine pairs are disulfide-bonded: C31-C162, C49-C65, C97-C255, C141-C209, C173-C188, and C199-C224. Catalysis depends on charge relay system residues H64 and D109. N-linked (GlcNAc...) asparagine glycosylation is found at N120 and N121. Residue S203 is the Charge relay system of the active site.

It belongs to the peptidase S1 family. Snake venom subfamily. Monomer. As to expression, expressed by the venom gland.

The protein localises to the secreted. In terms of biological role, snake venom serine protease that may act in the hemostasis system of the prey. This chain is Snake venom serine protease KN2, found in Trimeresurus stejnegeri (Chinese green tree viper).